We begin with the raw amino-acid sequence, 465 residues long: Fumarate hydratase class II (465 aa).

Substrate is bound by residues 99-101 (SGT), 130-133 (HPND), 140-142 (STN), and Thr-188. His-189 functions as the Proton donor/acceptor in the catalytic mechanism. The active site involves Ser-319. Substrate contacts are provided by residues Ser-320 and 325–327 (KVN).

This sequence belongs to the class-II fumarase/aspartase family. Fumarase subfamily. In terms of assembly, homotetramer.

Its subcellular location is the cytoplasm. The catalysed reaction is (S)-malate = fumarate + H2O. It participates in carbohydrate metabolism; tricarboxylic acid cycle; (S)-malate from fumarate: step 1/1. In terms of biological role, involved in the TCA cycle. Catalyzes the stereospecific interconversion of fumarate to L-malate. This chain is Fumarate hydratase class II, found in Prochlorococcus marinus (strain SARG / CCMP1375 / SS120).